A 944-amino-acid chain; its full sequence is Respiratory burst oxidase homolog protein F (944 aa).

Residues 2–387 (KPFSKNDRRR…VYIMQENWKR (386 aa)) are Cytoplasmic-facing. Coiled-coil stretches lie at residues 102–126 (QFSQELKAEAVAKAKQLSQELKRFS) and 157–184 (LEARALRKQRAQLDRTRSSAQRALRGLR). 2 EF-hand-like regions span residues 207-215 (EKNGYIYRS) and 241-252 (RRLKVEKINHDE). 2 EF-hand domains span residues 264–299 (SFDSRLQIFFDIVDKNEDGRITEEEVKEIIMLSASA) and 308–343 (QAEEYAALIMEELDPERLGYIELWQLETLLLQKDTY). Residues Asp-277, Asn-279, Asp-281, Arg-283, Glu-288, Asp-321, and Tyr-327 each contribute to the Ca(2+) site. Phosphoserine is present on residues Ser-354 and Ser-358. A helical membrane pass occupies residues 388 to 408 (IWVLSLWIMIMIGLFLWKFFQ). Over 409-475 (YKQKDAFHVM…INFHKTIAGA (67 aa)) the chain is Extracellular. In terms of domain architecture, Ferric oxidoreductase spans 426–583 (KGAAETLKFN…LFVIVYILLI (158 aa)). The helical transmembrane segment at 476 to 492 (IVVAVILHIGDHLACDF) threads the bilayer. The Cytoplasmic segment spans residues 493–527 (PRIVRATEYDYNRYLFHYFQTKQPTYFDLVKGPEG). Residues 528–548 (ITGILMVILMIISFTLATRWF) form a helical membrane-spanning segment. At 549–570 (RRNLVKLPKPFDRLTGFNAFWY) the chain is on the extracellular side. The chain crosses the membrane as a helical span at residues 571 to 591 (SHHLFVIVYILLILHGIFLYF). Over 592 to 599 (AKPWYVRT) the chain is Cytoplasmic. The helical transmembrane segment at 600-617 (TWMYLAVPVLLYGGERTL) threads the bilayer. The Extracellular portion of the chain corresponds to 618-744 (RYFRSGSYSV…PYGAPAQDYR (127 aa)). The FAD-binding FR-type domain occupies 622–742 (SGSYSVRLLK…DGPYGAPAQD (121 aa)). A helical membrane pass occupies residues 745–765 (KYDVLLLVGLGIGATPFISIL). The Cytoplasmic segment spans residues 766 to 944 (KDLLNNIVKM…TKFEFHKEHF (179 aa)).

This sequence belongs to the RBOH (TC 5.B.1.3) family. As to quaternary structure, monomer and homodimer. Interacts (via N-terminus) with CIPK26. Interacts (via N-terminus) with SRC2. Not glycosylated. Phosphorylated by CIPK26. As to expression, expressed in roots, stems, seedlings, inflorescences, leaves and guard cells.

The protein resides in the cell membrane. Its activity is regulated as follows. Inhibited by diphenylene iodonium (DPI). In terms of biological role, calcium-dependent NADPH oxidase that generates superoxide. Generates reactive oxygen species (ROS) during incompatible interactions with pathogens and is important in the regulation of the hypersensitive response (HR). Involved in abscisic acid-induced stomatal closing and in UV-B and abscisic acid ROS-dependent signaling. This is Respiratory burst oxidase homolog protein F (RBOHF) from Arabidopsis thaliana (Mouse-ear cress).